We begin with the raw amino-acid sequence, 53 residues long: uncharacterized protein (53 aa).

The first 23 residues, 1–23 (MSILLKILFKLLLLILSITFVIT), serve as a signal peptide directing secretion.

This is an uncharacterized protein from Acheta domesticus (House cricket).